The sequence spans 365 residues: MLRTRLIQAASSAQRAFSTSQKALAAKQMTVRDALNSALDDELARDDRVFILGEEVAQYDGAYKVSRGLWKKYGDKRVIDTPITEMGFAGIAVGAAMAGLRPVCEFMTWNFSMQAIDHIINSAAKTFYMSAGAVNVPIVFRGPNGAASGVAAQHSQCFAAWYAHCPGLKVLSPYDAEDARGLLKSAIRDPDPVVFLENELVYGTAFPVADNVADKDFLVPIGKAKVMRPGKDITLVAHSKAVETSLLAAAELAKKGIEAEVINLRSIRPLDTATIFASVRKTHHLVTVENGWPQHGVGAEICARIMEDQTFFELDAPVWRCAGVDVPMPYAKTLEAHALPRVQDLVEATLKVLGGKVGKAAAANK.

Residues 1–24 constitute a mitochondrion transit peptide; it reads MLRTRLIQAASSAQRAFSTSQKAL. Glu85 is a binding site for thiamine diphosphate. K(+)-binding residues include Ile138, Ala186, Ile187, and Asp189.

Thiamine diphosphate serves as cofactor. In terms of tissue distribution, expressed in salivary glands (at protein level).

It localises to the mitochondrion matrix. The catalysed reaction is N(6)-[(R)-lipoyl]-L-lysyl-[protein] + pyruvate + H(+) = N(6)-[(R)-S(8)-acetyldihydrolipoyl]-L-lysyl-[protein] + CO2. Functionally, the pyruvate dehydrogenase complex catalyzes the overall conversion of pyruvate to acetyl-CoA and CO(2). Might play a role in regulating synapse structure formation at neuromuscular junctions. Might play a role in maintenance of mitochondrial morphology. The sequence is that of Pyruvate dehydrogenase E1 component subunit beta, mitochondrial from Drosophila melanogaster (Fruit fly).